Consider the following 453-residue polypeptide: UDP-N-acetylmuramoylalanine--D-glutamate ligase (453 aa).

120–126 (GSNGKST) lines the ATP pocket.

It belongs to the MurCDEF family.

The protein resides in the cytoplasm. It catalyses the reaction UDP-N-acetyl-alpha-D-muramoyl-L-alanine + D-glutamate + ATP = UDP-N-acetyl-alpha-D-muramoyl-L-alanyl-D-glutamate + ADP + phosphate + H(+). The protein operates within cell wall biogenesis; peptidoglycan biosynthesis. Functionally, cell wall formation. Catalyzes the addition of glutamate to the nucleotide precursor UDP-N-acetylmuramoyl-L-alanine (UMA). The polypeptide is UDP-N-acetylmuramoylalanine--D-glutamate ligase (Nitrosococcus oceani (strain ATCC 19707 / BCRC 17464 / JCM 30415 / NCIMB 11848 / C-107)).